The sequence spans 742 residues: Polyphosphate kinase (742 aa).

Asparagine 91 is an ATP binding site. Mg(2+) contacts are provided by arginine 431 and arginine 461. Residue histidine 491 is the Phosphohistidine intermediate of the active site. 3 residues coordinate ATP: tyrosine 524, arginine 624, and histidine 652. Positions 718–742 are disordered; the sequence is WTASPQEGHSVRDHQESLMERHRSP. Positions 726 to 742 are enriched in basic and acidic residues; sequence HSVRDHQESLMERHRSP.

Belongs to the polyphosphate kinase 1 (PPK1) family. It depends on Mg(2+) as a cofactor. Post-translationally, an intermediate of this reaction is the autophosphorylated ppk in which a phosphate is covalently linked to a histidine residue through a N-P bond.

The catalysed reaction is [phosphate](n) + ATP = [phosphate](n+1) + ADP. Functionally, catalyzes the reversible transfer of the terminal phosphate of ATP to form a long-chain polyphosphate (polyP). This is Polyphosphate kinase from Mycobacterium bovis (strain ATCC BAA-935 / AF2122/97).